Reading from the N-terminus, the 269-residue chain is Formamidopyrimidine-DNA glycosylase (269 aa).

The active-site Schiff-base intermediate with DNA is proline 2. Glutamate 3 functions as the Proton donor in the catalytic mechanism. The active-site Proton donor; for beta-elimination activity is the lysine 57. Positions 90, 109, and 150 each coordinate DNA. The FPG-type zinc finger occupies 235–269; sequence QVYGRKGEPCRVCGTPIVATKHAQRATFYCRQCQK. Arginine 259 (proton donor; for delta-elimination activity) is an active-site residue.

It belongs to the FPG family. In terms of assembly, monomer. It depends on Zn(2+) as a cofactor.

The catalysed reaction is Hydrolysis of DNA containing ring-opened 7-methylguanine residues, releasing 2,6-diamino-4-hydroxy-5-(N-methyl)formamidopyrimidine.. The enzyme catalyses 2'-deoxyribonucleotide-(2'-deoxyribose 5'-phosphate)-2'-deoxyribonucleotide-DNA = a 3'-end 2'-deoxyribonucleotide-(2,3-dehydro-2,3-deoxyribose 5'-phosphate)-DNA + a 5'-end 5'-phospho-2'-deoxyribonucleoside-DNA + H(+). Its function is as follows. Involved in base excision repair of DNA damaged by oxidation or by mutagenic agents. Acts as a DNA glycosylase that recognizes and removes damaged bases. Has a preference for oxidized purines, such as 7,8-dihydro-8-oxoguanine (8-oxoG). Has AP (apurinic/apyrimidinic) lyase activity and introduces nicks in the DNA strand. Cleaves the DNA backbone by beta-delta elimination to generate a single-strand break at the site of the removed base with both 3'- and 5'-phosphates. This is Formamidopyrimidine-DNA glycosylase from Escherichia coli O6:K15:H31 (strain 536 / UPEC).